A 236-amino-acid polypeptide reads, in one-letter code: Ribosomal RNA small subunit methyltransferase G (236 aa).

Residues Gly80, 131 to 132 (AE), and Arg148 contribute to the S-adenosyl-L-methionine site.

This sequence belongs to the methyltransferase superfamily. RNA methyltransferase RsmG family.

It localises to the cytoplasm. Functionally, specifically methylates the N7 position of a guanine in 16S rRNA. This is Ribosomal RNA small subunit methyltransferase G from Ureaplasma parvum serovar 3 (strain ATCC 27815 / 27 / NCTC 11736).